A 292-amino-acid chain; its full sequence is Poly-beta-1,6-N-acetyl-D-glucosamine N-deacetylase (292 aa).

The N-terminal stretch at 1-28 is a signal peptide; it reads MKYRKFIILVLSILIILPVSTLDGHHIA. The NodB homology domain occupies 114–292; the sequence is RSVWINFDDM…WDGFHEKDET (179 aa).

This sequence belongs to the polysaccharide deacetylase family.

The protein resides in the secreted. It is found in the cell wall. Catalyzes the N-deacetylation of poly-beta-1,6-N-acetyl-D-glucosamine (PNAG, also referred to as PIA), a biofilm adhesin polysaccharide. N-deacetylation is crucial for attachment of the polysaccharide to the bacterial cell surface; it leads to the introduction of positive charges in the otherwise neutral PIA polymer, allowing electrostatic interactions. The polypeptide is Poly-beta-1,6-N-acetyl-D-glucosamine N-deacetylase (icaB) (Staphylococcus aureus (strain COL)).